The following is a 1488-amino-acid chain: Chromosome partition protein MukB (1488 aa).

Position 34-41 (34-41 (GGNGAGKS)) interacts with ATP. Coiled-coil stretches lie at residues 326–418 (LEAD…QYNQ), 444–472 (LDTFQAKEQEATEKLLSLEQKMSVAQTAH), and 509–602 (RHLA…QRAP). A flexible hinge region spans residues 666–783 (PGGAEDQRLN…SLPIFGRAAR (118 aa)). Coiled-coil stretches lie at residues 835 to 923 (EAEI…AKLE), 977 to 1116 (EMLS…AKAG), and 1209 to 1265 (VEAI…LQSV). Residues 1049 to 1074 (ADSGAEERARQRRDELHAQLSNNRSR) form a disordered region. Residues 1051–1065 (SGAEERARQRRDELH) are compositionally biased toward basic and acidic residues.

The protein belongs to the SMC family. MukB subfamily. In terms of assembly, homodimerization via its hinge domain. Binds to DNA via its C-terminal region. Interacts, and probably forms a ternary complex, with MukE and MukF via its C-terminal region. The complex formation is stimulated by calcium or magnesium. Interacts with tubulin-related protein FtsZ.

It is found in the cytoplasm. It localises to the nucleoid. Plays a central role in chromosome condensation, segregation and cell cycle progression. Functions as a homodimer, which is essential for chromosome partition. Involved in negative DNA supercoiling in vivo, and by this means organize and compact chromosomes. May achieve or facilitate chromosome segregation by condensation DNA from both sides of a centrally located replisome during cell division. The polypeptide is Chromosome partition protein MukB (Salmonella arizonae (strain ATCC BAA-731 / CDC346-86 / RSK2980)).